A 99-amino-acid polypeptide reads, in one-letter code: Putative GIY-YIG domain-containing protein 242L (99 aa).

The GIY-YIG domain occupies 5–81 (NGWNIYMVTM…KKQTKKVKLQ (77 aa)).

This chain is Putative GIY-YIG domain-containing protein 242L, found in Invertebrate iridescent virus 6 (IIV-6).